A 258-amino-acid chain; its full sequence is Sugar fermentation stimulation protein homolog (258 aa).

The protein belongs to the SfsA family.

In Marinomonas sp. (strain MWYL1), this protein is Sugar fermentation stimulation protein homolog.